The chain runs to 186 residues: Putative manganese efflux pump MntP (186 aa).

A run of 6 helical transmembrane segments spans residues 3–23 (PIAL…AAIG), 39–59 (IGII…LIGK), 65–85 (VEAW…LHMI), 109–129 (CLTA…LAFI), 133–153 (IWIA…IGIM), and 166–186 (AEIF…YGQL).

This sequence belongs to the MntP (TC 9.B.29) family.

The protein resides in the cell inner membrane. In terms of biological role, probably functions as a manganese efflux pump. This chain is Putative manganese efflux pump MntP, found in Alcanivorax borkumensis (strain ATCC 700651 / DSM 11573 / NCIMB 13689 / SK2).